The chain runs to 207 residues: MEITEIKLKKRDKIGKQYAKKYRRSNLIPGVVYGAHLKENIHVLVEKKDLWNLIKKGHSKEQHILRLIIEDGENTITENAILQDIQIDPIKDDLLHVDFHAVSLEEVVDVYVPVVLVGESKGVKQGGILQHGVEEILIRALPLDVPPHIEVDITDLEIGDSITVGDLNLPENIKVLTPADEVIVNIIPPKGYTEEASTEESQTESQS.

Belongs to the bacterial ribosomal protein bL25 family. CTC subfamily. Part of the 50S ribosomal subunit; part of the 5S rRNA/L5/L18/L25 subcomplex. Contacts the 5S rRNA. Binds to the 5S rRNA independently of L5 and L18.

This is one of the proteins that binds to the 5S RNA in the ribosome where it forms part of the central protuberance. In Dictyoglomus thermophilum (strain ATCC 35947 / DSM 3960 / H-6-12), this protein is Large ribosomal subunit protein bL25.